The following is a 406-amino-acid chain: RILP-like protein 1 (406 aa).

Ser7 bears the Phosphoserine mark. One can recognise an RH1 domain in the interval 10-97; that stretch reads AALSALEKNV…RVERMDRIEK (88 aa). Cys47 carries the S-nitrosocysteine modification. The stretch at 76-258 forms a coiled coil; that stretch reads ELDELRLELD…KLRERLQGEH (183 aa). Disordered stretches follow at residues 255–280 and 330–354; these read QGEH…ESIS and EIEE…QPES. Ser259 is subject to Phosphoserine. The segment covering 262 to 280 has biased composition (acidic residues); it reads GEEEEAEIPPQPDGEESIS. Residues 294–359 form the RH2 domain; sequence RPRFTLQELR…PQPESGIKRL (66 aa).

Belongs to the RILPL family. In terms of assembly, interacts (when S-nitrosylated) with GAPDH. Interacts with RAB8A; interaction is dependent on the phosphorylation of 'Thr-72' of RAB8A. Interacts with RAB10 and RAB12; the interaction is dependent on the phosphorylation of 'Thr-73' of RAB10, and 'Ser-105' of RAB12. In terms of processing, S-nitrosylation is required for the interaction with GAPDH. As to expression, highly expressed in heart, skeletal muscle, brain and lung (at protein level).

It is found in the cytoplasm. The protein resides in the cytosol. Its subcellular location is the cytoskeleton. The protein localises to the microtubule organizing center. It localises to the centrosome. It is found in the centriole. The protein resides in the cilium basal body. Functionally, plays a role in the regulation of cell shape and polarity. Plays a role in cellular protein transport, including protein transport away from primary cilia. Neuroprotective protein, which acts by sequestring GAPDH in the cytosol and prevent the apoptotic function of GAPDH in the nucleus. Competes with SIAH1 for binding GAPDH. Does not regulate lysosomal morphology and distribution. Binds to RAB10 following LRRK2-mediated RAB10 phosphorylation which leads to inhibition of ciliogenesis. The protein is RILP-like protein 1 (Rilpl1) of Rattus norvegicus (Rat).